Reading from the N-terminus, the 492-residue chain is Phosphatidylinositol 4-kinase type 2-beta (492 aa).

The span at methionine 1–aspartate 11 shows a compositional bias: basic and acidic residues. The disordered stretch occupies residues methionine 1–histidine 98. The PI3K/PI4K catalytic domain maps to glycine 127–arginine 462. Residues isoleucine 133 to glycine 139 form a G-loop region. ATP contacts are provided by serine 140 and lysine 155. The tract at residues glutamate 160–tyrosine 162 is important for substrate binding. The interval lysine 168–cysteine 181 is important for interaction with membranes. ATP is bound by residues glutamine 264–valine 267 and arginine 278–lysine 279. Positions lysine 271–lysine 279 are important for interaction with membranes. A catalytic loop region spans residues arginine 308–asparagine 316. Positions alanine 353 to phenylalanine 373 are activation loop. Aspartate 355 serves as a coordination point for ATP. Positions tryptophan 368–tryptophan 377 are important for interaction with membranes.

The protein belongs to the PI3/PI4-kinase family. Type II PI4K subfamily.

The protein localises to the cytoplasm. Its subcellular location is the cytosol. The protein resides in the golgi apparatus membrane. It is found in the endoplasmic reticulum membrane. It localises to the cell membrane. The protein localises to the early endosome membrane. The enzyme catalyses a 1,2-diacyl-sn-glycero-3-phospho-(1D-myo-inositol) + ATP = a 1,2-diacyl-sn-glycero-3-phospho-(1D-myo-inositol 4-phosphate) + ADP + H(+). Its function is as follows. Contributes to the overall PI4-kinase activity of the cell. This contribution may be especially significant in plasma membrane, endosomal and Golgi compartments. The phosphorylation of phosphatidylinositol (PI) to PI4P is the first committed step in the generation of phosphatidylinositol 4,5-bisphosphate (PIP2), a precursor of the second messenger inositol 1,4,5-trisphosphate (InsP3). This chain is Phosphatidylinositol 4-kinase type 2-beta (pi4k2b), found in Xenopus tropicalis (Western clawed frog).